Consider the following 585-residue polypeptide: A-type ATP synthase subunit A (585 aa).

235-242 (GPFGSGKT) contributes to the ATP binding site.

The protein belongs to the ATPase alpha/beta chains family. As to quaternary structure, has multiple subunits with at least A(3), B(3), C, D, E, F, H, I and proteolipid K(x).

Its subcellular location is the cell membrane. The catalysed reaction is ATP + H2O + 4 H(+)(in) = ADP + phosphate + 5 H(+)(out). In terms of biological role, component of the A-type ATP synthase that produces ATP from ADP in the presence of a proton gradient across the membrane. The A chain is the catalytic subunit. The polypeptide is A-type ATP synthase subunit A (Halobacterium salinarum (strain ATCC 29341 / DSM 671 / R1)).